Here is a 728-residue protein sequence, read N- to C-terminus: Sodium-dependent transporter snf-5 (728 aa).

Topologically, residues Met1 to Gly84 are cytoplasmic. Positions Met1 to Gly84 are disordered. 2 stretches are compositionally biased toward low complexity: residues Gln29–Ser50 and Lys60–Thr73. Residues Phe85–Ile105 form a helical membrane-spanning segment. The Na(+) site is built by Gly97, Ala99, Val100, and Asn104. Residues Trp106–Ala119 lie on the Extracellular side of the membrane. Residues Phe120–Phe140 form a helical membrane-spanning segment. Topologically, residues Leu141–Glu162 are cytoplasmic. Residues Gly163–Val183 traverse the membrane as a helical segment. Residues Ser184–Gly285 lie on the Extracellular side of the membrane. Cys204 and Cys214 are joined by a disulfide. N-linked (GlcNAc...) asparagine glycosylation is found at Asn210, Asn225, Asn232, Asn237, and Asn257. Residues Phe286–Leu306 traverse the membrane as a helical segment. The Cytoplasmic portion of the chain corresponds to Lys307 to Lys314. Residues Ile315–Val335 traverse the membrane as a helical segment. The Extracellular portion of the chain corresponds to Phe336–Glu364. N-linked (GlcNAc...) asparagine glycosylation occurs at Asn352. Residues Ala365–Tyr386 traverse the membrane as a helical segment. Position 372 (Ser372) interacts with Na(+). Residues Ser387–Asp396 are Cytoplasmic-facing. The helical transmembrane segment at Ala397–Ala417 threads the bilayer. Topologically, residues Thr418–Arg451 are extracellular. Residues Met452 to Ser472 form a helical membrane-spanning segment. Leu469 contributes to the Na(+) binding site. Residues Thr473 to Arg495 lie on the Cytoplasmic side of the membrane. A helical membrane pass occupies residues Lys496–Thr516. The Extracellular portion of the chain corresponds to Arg517 to Ala531. The helical transmembrane segment at Gly532 to Phe552 threads the bilayer. The Cytoplasmic portion of the chain corresponds to Arg553–Ser578. A helical membrane pass occupies residues Trp579 to Leu599. Residues Ser600–Ala616 lie on the Extracellular side of the membrane. A helical membrane pass occupies residues Val617–Met637. At Leu638–Tyr728 the chain is on the cytoplasmic side. Over residues Pro687 to Glu699 the composition is skewed to acidic residues. Positions Pro687 to Tyr728 are disordered. Positions Ile718 to Tyr728 are enriched in polar residues.

Belongs to the sodium:neurotransmitter symporter (SNF) (TC 2.A.22) family. In terms of tissue distribution, expressed in the INT-9 cells and posterior cells of the alimentary canal of the intestine, gut epithelial cells, the pharynx of some worms, two cells of the rectal gland, and in DVA, DVB and DVC neurons and amphid sensory neurons ASI, ADF and ASK neurons.

The protein localises to the cell membrane. In terms of biological role, sodium-dependent amino acid transporter that mediates the uptake of the L-enantiomers of various amino acids, including L-proline and L-methionine, and also of acidic amino acids such as L-glutamic acid and L-aspartic acid. May additionally have a role in potassium-dependent amino acid absorption. In response to the availability of amino acid nutrients, may play a role in dauer formation. May play a role in promoting fertility. The sequence is that of Sodium-dependent transporter snf-5 from Caenorhabditis elegans.